We begin with the raw amino-acid sequence, 228 residues long: Ribulose-phosphate 3-epimerase (228 aa).

A substrate-binding site is contributed by Ser11. His36, Asp38, and His69 together coordinate a divalent metal cation. The Proton acceptor role is filled by Asp38. Residues His69, 145-148 (GFCG), 180-182 (DGG), and 202-203 (AS) each bind substrate. Asp180 contributes to the a divalent metal cation binding site. Asp180 acts as the Proton donor in catalysis.

It belongs to the ribulose-phosphate 3-epimerase family. Requires a divalent metal cation as cofactor.

The catalysed reaction is D-ribulose 5-phosphate = D-xylulose 5-phosphate. The protein operates within carbohydrate degradation. Functionally, catalyzes the reversible epimerization of D-ribulose 5-phosphate to D-xylulose 5-phosphate. In Chlamydia muridarum (strain MoPn / Nigg), this protein is Ribulose-phosphate 3-epimerase.